A 601-amino-acid chain; its full sequence is Proline--tRNA ligase (601 aa).

Belongs to the class-II aminoacyl-tRNA synthetase family. ProS type 1 subfamily. Homodimer.

It is found in the cytoplasm. The enzyme catalyses tRNA(Pro) + L-proline + ATP = L-prolyl-tRNA(Pro) + AMP + diphosphate. In terms of biological role, catalyzes the attachment of proline to tRNA(Pro) in a two-step reaction: proline is first activated by ATP to form Pro-AMP and then transferred to the acceptor end of tRNA(Pro). As ProRS can inadvertently accommodate and process non-cognate amino acids such as alanine and cysteine, to avoid such errors it has two additional distinct editing activities against alanine. One activity is designated as 'pretransfer' editing and involves the tRNA(Pro)-independent hydrolysis of activated Ala-AMP. The other activity is designated 'posttransfer' editing and involves deacylation of mischarged Ala-tRNA(Pro). The misacylated Cys-tRNA(Pro) is not edited by ProRS. This chain is Proline--tRNA ligase, found in Tropheryma whipplei (strain TW08/27) (Whipple's bacillus).